The sequence spans 325 residues: Glutarate 2-hydroxylase (325 aa).

3 residues coordinate Fe cation: His-160, Asp-162, and His-292.

The protein belongs to the glutarate hydroxylase family. As to quaternary structure, homotetramer. Fe(2+) serves as cofactor.

The catalysed reaction is glutarate + 2-oxoglutarate + O2 = (S)-2-hydroxyglutarate + succinate + CO2. It functions in the pathway amino-acid degradation. Acts as an alpha-ketoglutarate-dependent dioxygenase catalyzing hydroxylation of glutarate (GA) to L-2-hydroxyglutarate (L2HG). Functions in a L-lysine degradation pathway that proceeds via cadaverine, glutarate and L-2-hydroxyglutarate. This Escherichia coli (strain K12 / MC4100 / BW2952) protein is Glutarate 2-hydroxylase.